Reading from the N-terminus, the 180-residue chain is Large ribosomal subunit protein uL5 (180 aa).

This sequence belongs to the universal ribosomal protein uL5 family. Part of the 50S ribosomal subunit; part of the 5S rRNA/L5/L18/L25 subcomplex. Contacts the 5S rRNA and the P site tRNA. Forms a bridge to the 30S subunit in the 70S ribosome.

Its function is as follows. This is one of the proteins that bind and probably mediate the attachment of the 5S RNA into the large ribosomal subunit, where it forms part of the central protuberance. In the 70S ribosome it contacts protein S13 of the 30S subunit (bridge B1b), connecting the 2 subunits; this bridge is implicated in subunit movement. Contacts the P site tRNA; the 5S rRNA and some of its associated proteins might help stabilize positioning of ribosome-bound tRNAs. The sequence is that of Large ribosomal subunit protein uL5 from Synechocystis sp. (strain ATCC 27184 / PCC 6803 / Kazusa).